We begin with the raw amino-acid sequence, 362 residues long: Zinc phosphodiesterase ELAC protein 1 (362 aa).

Residues histidine 62, histidine 64, aspartate 66, histidine 67, histidine 181, aspartate 252, and histidine 312 each contribute to the Zn(2+) site. The active-site Proton acceptor is aspartate 66.

This sequence belongs to the RNase Z family. Homodimer. Zn(2+) serves as cofactor.

The protein resides in the cytoplasm. The protein localises to the cytosol. It is found in the nucleus. It catalyses the reaction Endonucleolytic cleavage of RNA, removing extra 3' nucleotides from tRNA precursor, generating 3' termini of tRNAs. A 3'-hydroxy group is left at the tRNA terminus and a 5'-phosphoryl group is left at the trailer molecule.. Zinc phosphodiesterase, which displays some tRNA 3'-processing endonuclease activity. Specifically involved in tRNA repair: acts downstream of the ribosome-associated quality control (RQC) pathway by removing a 2',3'-cyclic phosphate from tRNAs following cleavage by ANKZF1. tRNAs are then processed by TRNT1. This is Zinc phosphodiesterase ELAC protein 1 (Elac1) from Mus musculus (Mouse).